Reading from the N-terminus, the 155-residue chain is Protein-export protein SecB (155 aa).

The protein belongs to the SecB family. Homotetramer, a dimer of dimers. One homotetramer interacts with 1 SecA dimer.

It is found in the cytoplasm. One of the proteins required for the normal export of preproteins out of the cell cytoplasm. It is a molecular chaperone that binds to a subset of precursor proteins, maintaining them in a translocation-competent state. It also specifically binds to its receptor SecA. The sequence is that of Protein-export protein SecB from Klebsiella pneumoniae subsp. pneumoniae (strain ATCC 700721 / MGH 78578).